A 286-amino-acid polypeptide reads, in one-letter code: Bifunctional protein FolD (286 aa).

Residues 165–167 (GRS) and Ser-190 contribute to the NADP(+) site.

It belongs to the tetrahydrofolate dehydrogenase/cyclohydrolase family. In terms of assembly, homodimer.

It carries out the reaction (6R)-5,10-methylene-5,6,7,8-tetrahydrofolate + NADP(+) = (6R)-5,10-methenyltetrahydrofolate + NADPH. The catalysed reaction is (6R)-5,10-methenyltetrahydrofolate + H2O = (6R)-10-formyltetrahydrofolate + H(+). It functions in the pathway one-carbon metabolism; tetrahydrofolate interconversion. In terms of biological role, catalyzes the oxidation of 5,10-methylenetetrahydrofolate to 5,10-methenyltetrahydrofolate and then the hydrolysis of 5,10-methenyltetrahydrofolate to 10-formyltetrahydrofolate. The sequence is that of Bifunctional protein FolD from Paraburkholderia phytofirmans (strain DSM 17436 / LMG 22146 / PsJN) (Burkholderia phytofirmans).